The sequence spans 242 residues: Demethylmenaquinone methyltransferase (242 aa).

2 residues coordinate S-adenosyl-L-methionine: T74 and D93.

Belongs to the class I-like SAM-binding methyltransferase superfamily. MenG/UbiE family.

The enzyme catalyses a 2-demethylmenaquinol + S-adenosyl-L-methionine = a menaquinol + S-adenosyl-L-homocysteine + H(+). The protein operates within quinol/quinone metabolism; menaquinone biosynthesis; menaquinol from 1,4-dihydroxy-2-naphthoate: step 2/2. In terms of biological role, methyltransferase required for the conversion of demethylmenaquinol (DMKH2) to menaquinol (MKH2). The protein is Demethylmenaquinone methyltransferase of Chlorobaculum tepidum (strain ATCC 49652 / DSM 12025 / NBRC 103806 / TLS) (Chlorobium tepidum).